The following is a 208-amino-acid chain: Small ribosomal subunit protein uS4A (208 aa).

In terms of domain architecture, S4 RNA-binding spans leucine 98–leucine 161.

It belongs to the universal ribosomal protein uS4 family. As to quaternary structure, part of the 30S ribosomal subunit. Contacts protein S5. The interaction surface between S4 and S5 is involved in control of translational fidelity.

Functionally, one of the primary rRNA binding proteins, it binds directly to 16S rRNA where it nucleates assembly of the body of the 30S subunit. With S5 and S12 plays an important role in translational accuracy. This Myxococcus xanthus (strain DK1622) protein is Small ribosomal subunit protein uS4A.